Here is a 591-residue protein sequence, read N- to C-terminus: Probable methyltransferase PMT6 (591 aa).

The Cytoplasmic portion of the chain corresponds to 1–13 (MRGSVIGAERSGQ). Residues 14–34 (TIMVALVLMVGSFYTGSLFGT) form a helical; Signal-anchor for type II membrane protein membrane-spanning segment. Topologically, residues 35-591 (NQPIYVSHPS…FCRKRFWAII (557 aa)) are lumenal. Asn87, Asn99, Asn146, Asn193, Asn323, Asn436, Asn473, and Asn515 each carry an N-linked (GlcNAc...) asparagine glycan.

It belongs to the methyltransferase superfamily.

It localises to the endoplasmic reticulum membrane. This Arabidopsis thaliana (Mouse-ear cress) protein is Probable methyltransferase PMT6.